The following is a 396-amino-acid chain: MAKKHVSDLDLKGKVVLERADFNVPLKDGKITNDNRIVQALPTIEYILDQGGRLVLFSHLGKVKEESDKEKLTLRPVAERLSEKLGKDVNFIPHTRGEVLEKAIAELKDGEVLLVENTRFEDLDGKKESKNDPELGKYWASLGDVFVNDAFGTAHRSHASNVGIASNLESAAGDLMEKEIKFIGGVVNNPDKPVVAILGGAKVSDKIGVIENLLNVADKVLIGGGMAYTFLKAQGYEIGKSLLEADKVDFAKDLLERAGDKIVLPVDAKVAREFSNEAQFTVVTIDQIPADQEALDIGPKTVELFEKELKGAHTVVWNGPMGVFEFENFAQGTVGVCEAIAEMKDATTIIGGGDSAAAAMMLGFEDDFSHISTGGGASLEYLEGKELPGIQSISDK.

Residues 21–23 (DFN), R36, 59–62 (HLGK), R119, and R156 contribute to the substrate site. Residues K206, E325, and 352 to 355 (GGDS) each bind ATP.

Belongs to the phosphoglycerate kinase family. In terms of assembly, monomer.

It is found in the cytoplasm. The enzyme catalyses (2R)-3-phosphoglycerate + ATP = (2R)-3-phospho-glyceroyl phosphate + ADP. It functions in the pathway carbohydrate degradation; glycolysis; pyruvate from D-glyceraldehyde 3-phosphate: step 2/5. The chain is Phosphoglycerate kinase from Staphylococcus carnosus (strain TM300).